We begin with the raw amino-acid sequence, 567 residues long: Eukaryotic translation initiation factor 3 subunit D (567 aa).

Disordered regions lie at residues 12–34 (PVKS…YAPF) and 122–160 (GQNV…RGRR). Positions 128 to 142 (GGRGGRYGSSGGRGA) are enriched in gly residues. Residues 300–314 (PFDYLTVNENAYDSP) form an RNA gate region.

The protein belongs to the eIF-3 subunit D family. As to quaternary structure, component of the eukaryotic translation initiation factor 3 (eIF-3) complex. The eIF-3 complex appears to include tif32/eif3a, SPAC25G10.08/eif3b, tif33/eif3c, SPBC4C3.07/eif3f, tif35/eif3g and sum1/eif3i. This set of common subunits may also associate exclusively with either moe1/eif3d and int6/eif3e, or with SPAC821.05/eif3h and SPAC1751.03/eif3m. The eIF-3 complex may also include SPAC3A12.13c/eif3j.

It is found in the cytoplasm. In terms of biological role, mRNA cap-binding component of the eukaryotic translation initiation factor 3 (eIF-3) complex, which is involved in protein synthesis of a specialized repertoire of mRNAs and, together with other initiation factors, stimulates binding of mRNA and methionyl-tRNAi to the 40S ribosome. The eIF-3 complex specifically targets and initiates translation of a subset of mRNAs involved in cell proliferation. In the eIF-3 complex, eif3d specifically recognizes and binds the 7-methylguanosine cap of a subset of mRNAs. This Schizosaccharomyces pombe (strain 972 / ATCC 24843) (Fission yeast) protein is Eukaryotic translation initiation factor 3 subunit D (moe1).